The primary structure comprises 131 residues: Global transcriptional regulator Spx (131 aa).

Cysteines 10 and 13 form a disulfide.

Belongs to the ArsC family. Spx subfamily. As to quaternary structure, interacts with the C-terminal domain of the alpha subunit of the RNAP.

Its subcellular location is the cytoplasm. Its function is as follows. Global transcriptional regulator that plays a key role in stress response and exerts either positive or negative regulation of genes. Acts by interacting with the C-terminal domain of the alpha subunit of the RNA polymerase (RNAP). This interaction can enhance binding of RNAP to the promoter region of target genes and stimulate their transcription, or block interaction of RNAP with activator. This Listeria innocua serovar 6a (strain ATCC BAA-680 / CLIP 11262) protein is Global transcriptional regulator Spx.